The following is a 458-amino-acid chain: MASPALAAALAAAAAEGPNGSDAGEWGSGGGANASGTDWGPPPGQYSAGAVAGLAAVVGFLIVFTVVGNVLVVIAVLTSRALRAPQNLFLVSLASADILVATLVMPFSLANELMAYWYFGQVWCGVYLALDVLFCTSSIVHLCAISLDRYWSVTQAVEYNLKRTPRRVKATIVAVWLISAVISFPPLVSFYRRPDGAAYPQCGLNDETWYILSSCIGSFFAPCLIMGLVYARIYRVAKLRTRTLSEKRGPAGPDGASPTTENGLGKAAGENGHCAPPRTEVEPDESSAAERRRRRGALRRGGRRREGAEGDTGSADGPGPGLAAEQGARTASRSPGPGGRLSRASSRSVEFFLSRRRRARSSVCRRKVAQAREKRFTFVLAVVMGVFVLCWFPFFFSYSLYGICREACQLPEPLFKFFFWIGYCNSSLNPVIYTVFNQDFRRSFKHILFRRRRRGFRQ.

Residues 1-51 lie on the Extracellular side of the membrane; it reads MASPALAAALAAAAAEGPNGSDAGEWGSGGGANASGTDWGPPPGQYSAGAV. 2 N-linked (GlcNAc...) asparagine glycosylation sites follow: Asn19 and Asn33. Residues 52 to 76 form a helical membrane-spanning segment; it reads AGLAAVVGFLIVFTVVGNVLVVIAV. Residues 77–88 are Cytoplasmic-facing; that stretch reads LTSRALRAPQNL. The helical transmembrane segment at 89 to 114 threads the bilayer; the sequence is FLVSLASADILVATLVMPFSLANELM. Topologically, residues 115–124 are extracellular; sequence AYWYFGQVWC. An intrachain disulfide couples Cys124 to Cys202. Residues 125–147 traverse the membrane as a helical segment; that stretch reads GVYLALDVLFCTSSIVHLCAISL. Residues 148–168 lie on the Cytoplasmic side of the membrane; that stretch reads DRYWSVTQAVEYNLKRTPRRV. A helical membrane pass occupies residues 169–191; sequence KATIVAVWLISAVISFPPLVSFY. Residues 192 to 207 are Extracellular-facing; it reads RRPDGAAYPQCGLNDE. Residues 208 to 231 traverse the membrane as a helical segment; the sequence is TWYILSSCIGSFFAPCLIMGLVYA. Residues 232–379 lie on the Cytoplasmic side of the membrane; it reads RIYRVAKLRT…QAREKRFTFV (148 aa). The tract at residues 245–343 is disordered; that stretch reads SEKRGPAGPD…SPGPGGRLSR (99 aa). The segment covering 291-303 has biased composition (basic residues); the sequence is RRRRRGALRRGGR. The chain crosses the membrane as a helical span at residues 380–403; sequence LAVVMGVFVLCWFPFFFSYSLYGI. Residues 404–416 are Extracellular-facing; that stretch reads CREACQLPEPLFK. Residues 417–437 traverse the membrane as a helical segment; the sequence is FFFWIGYCNSSLNPVIYTVFN. Topologically, residues 438 to 458 are cytoplasmic; sequence QDFRRSFKHILFRRRRRGFRQ.

It belongs to the G-protein coupled receptor 1 family. Adrenergic receptor subfamily. ADRA2C sub-subfamily.

It is found in the cell membrane. In terms of biological role, alpha-2 adrenergic receptors mediate the catecholamine-induced inhibition of adenylate cyclase through the action of G proteins. This is Alpha-2C adrenergic receptor (Adra2c) from Rattus norvegicus (Rat).